The primary structure comprises 92 residues: UPF0297 protein TTE1249 (92 aa).

Belongs to the UPF0297 family.

In Caldanaerobacter subterraneus subsp. tengcongensis (strain DSM 15242 / JCM 11007 / NBRC 100824 / MB4) (Thermoanaerobacter tengcongensis), this protein is UPF0297 protein TTE1249.